The sequence spans 441 residues: Histidinol dehydrogenase homolog (441 aa).

H266 is a Zn(2+) binding site. Residues E334 and H335 each act as proton acceptor in the active site. H427 contacts Zn(2+).

This sequence belongs to the histidinol dehydrogenase family. Zn(2+) serves as cofactor.

In Cereibacter sphaeroides (strain ATCC 17023 / DSM 158 / JCM 6121 / CCUG 31486 / LMG 2827 / NBRC 12203 / NCIMB 8253 / ATH 2.4.1.) (Rhodobacter sphaeroides), this protein is Histidinol dehydrogenase homolog.